Consider the following 316-residue polypeptide: UPF0324 membrane protein SO_4708 (316 aa).

Helical transmembrane passes span 61-80 (LLSY…AAIE), 85-107 (NLGL…TRAL), 114-136 (GHLI…APAV), 146-168 (ALAC…GHLL), 175-197 (FGVW…SAYG), 207-226 (IKLA…ALIF), 233-252 (LNLP…AHWL), 262-281 (LFMV…GAGI), and 293-315 (PLLL…ILYF).

It belongs to the UPF0324 family.

Its subcellular location is the cell membrane. The polypeptide is UPF0324 membrane protein SO_4708 (Shewanella oneidensis (strain ATCC 700550 / JCM 31522 / CIP 106686 / LMG 19005 / NCIMB 14063 / MR-1)).